The chain runs to 1117 residues: Protein ECM21 (1117 aa).

Disordered regions lie at residues 1–48 (MPFI…RRSS) and 63–155 (VHSP…YSQI). The span at 11–34 (KNSSHSLSETDLNQSKGQPFQPSP) shows a compositional bias: polar residues. Serine 18 bears the Phosphoserine mark. Low complexity predominate over residues 70–81 (NNTTKGGNNNGN). Phosphoserine is present on serine 115. Low complexity predominate over residues 117–130 (SDSATTTPRSSTSD). The residue at position 140 (serine 140) is a Phosphoserine. Lysine 191 is covalently cross-linked (Glycyl lysine isopeptide (Lys-Gly) (interchain with G-Cter in ubiquitin)). Disordered regions lie at residues 275–312 (ATTA…ELNT) and 486–523 (YRQD…AQAH). A Phosphoserine modification is found at serine 286. Positions 501-519 (SSSSLSSTTSSLKLTETES) are enriched in low complexity. Residues serine 527 and serine 550 each carry the phosphoserine modification. Glycyl lysine isopeptide (Lys-Gly) (interchain with G-Cter in ubiquitin) cross-links involve residues lysine 577, lysine 651, and lysine 712. Serine 775 carries the post-translational modification Phosphoserine. Glycyl lysine isopeptide (Lys-Gly) (interchain with G-Cter in ubiquitin) cross-links involve residues lysine 794, lysine 807, and lysine 1024. Disordered regions lie at residues 1016-1065 (RSRF…KDKQ) and 1079-1117 (KDDE…SDEE). The span at 1027-1059 (STPSPVNRSHNSSPTNGLSQANGTVRIPNATTE) shows a compositional bias: polar residues. Serine 1035 is subject to Phosphoserine. A compositionally biased stretch (low complexity) spans 1089–1098 (SSSSADSLLS).

The protein belongs to the CSR2 family.

Its subcellular location is the cytoplasm. Functionally, may be involved in cell wall organization and biogenesis. This Saccharomyces cerevisiae (strain ATCC 204508 / S288c) (Baker's yeast) protein is Protein ECM21 (ECM21).